The following is a 78-amino-acid chain: UPF0335 protein RP113 (78 aa).

This sequence belongs to the UPF0335 family.

In Rickettsia prowazekii (strain Madrid E), this protein is UPF0335 protein RP113.